The following is a 79-amino-acid chain: Immunity protein CdiI (79 aa).

The next 2 helical transmembrane spans lie at 12 to 32 (IIFFPMLCTVLGLLGIPIGLI) and 51 to 71 (VVLFTLKIGIPIGFILGLGLW).

Probably interacts with cognate toxin CdiA.

Its subcellular location is the cell inner membrane. Its function is as follows. Immunity protein component of a toxin-immunity protein module, which functions as a cellular contact-dependent growth inhibition (CDI) system. CDI modules allow bacteria to communicate with and inhibit the growth of closely related neighboring bacteria in a contact-dependent fashion. Protects cells against CdiA from the same strain, its cognate toxin protein. Growth inhibition is reversible upon induction of this protein, occurring about 2.5 hours after induction, and requires an energy source. Does not protect against non-cognate CdiA from E.coli strain 563 / UPEC, D.dadantii strain 3937 or Y.pestis strain CO92. The chain is Immunity protein CdiI from Escherichia coli.